Consider the following 281-residue polypeptide: Cell growth regulator with EF hand domain protein 1 (281 aa).

A signal peptide spans 1–21 (MFQWLMQALMLPLLLLPLGRA). 2 consecutive EF-hand domains span residues 71 to 106 (DREQ…ALAP) and 115 to 150 (PVIL…PKHT). Asp84, Asp86, Asn88, Gln90, Glu95, Asp128, Asp130, Asp132, and Glu139 together coordinate Ca(2+). The interval 148-281 (KHTESLPPAL…HSIQLENDEI (134 aa)) is disordered. Residues 168–183 (LLANSPLQSETQQSLG) are compositionally biased toward polar residues. A compositionally biased stretch (basic and acidic residues) spans 184-213 (TKEEIRGQVEAKRASLEPEQEAGHQTEGKV). 2 positions are modified to phosphoserine: Ser217 and Ser228. A compositionally biased stretch (basic and acidic residues) spans 237–256 (EGAEEQVEIKDNEGEAKELL).

Probably digested extracellularly by an unknown serine protease generating extremely hydrophobic bioactive peptides.

It localises to the secreted. Its function is as follows. Mediates cell-cell adhesion in a calcium-dependent manner. Able to inhibit growth in several cell lines. In Mus musculus (Mouse), this protein is Cell growth regulator with EF hand domain protein 1.